The following is a 425-amino-acid chain: MTVIIFLSVLLGTIILGVPVAFALLICGIALMLHLDFFNAQILAQQLVSGADSFSLMAIPFFILAGEIMNEGGLSKRIIDLPMKLVGHKRGGLGFVAILSAMIMASLSGSAVADTAAVAAMLLPMMKTTGYPIHRSAGLIGTAGIIAPIIPPSIPFIVFGVASGVSITKLFLAGIFPGVIMGCCLAILWRWQAKRLNLMTFSKATKQDLCFSFKNSVWALMLPVIIIGGFRSGIFTPTEAGVVATFYALIVSLFIYHELPLKHLPKVLLAAAKTTAVVMFLVASANVTGYLITVAELPTMLTILLEPLIENPTILLLVIMLAVFVIGMVMDLTPTVLILTPVLMPLVEEAGIDPVYFGVLFILNTSIGLITPPVGNVLNVITGVSKLPFDQAAKGIMPYLGMMIMLLLTFIFIPELILMPLQWIQ.

Helical transmembrane passes span 3 to 23, 24 to 44, 54 to 74, 93 to 113, 139 to 159, 169 to 189, 217 to 237, 241 to 261, 275 to 295, 312 to 332, 334 to 354, 355 to 375, and 399 to 419; these read VIIF…VAFA, LLIC…QILA, FSLM…EGGL, LGFV…SAVA, LIGT…FIVF, KLFL…AILW, VWAL…IFTP, GVVA…ELPL, TAVV…ITVA, PTIL…VMDL, PTVL…GIDP, VYFG…PPVG, and YLGM…LILM.

It belongs to the TRAP transporter large permease family.

It localises to the cell inner membrane. This is Putative TRAP transporter large permease protein HI_1029 from Haemophilus influenzae (strain ATCC 51907 / DSM 11121 / KW20 / Rd).